Consider the following 488-residue polypeptide: Sucrose phosphorylase (488 aa).

Sucrose-binding positions include Asp50, His88, 191-193, Glu233, 290-291, 341-344, and Arg398; these read RLD, HD, and DLYQ. Asp193 acts as the Nucleophile in catalysis. The active-site Proton donor is the Glu233.

This sequence belongs to the glycosyl hydrolase 13 family. Sucrose phosphorylase subfamily.

The catalysed reaction is sucrose + phosphate = D-fructose + alpha-D-glucose 1-phosphate. The chain is Sucrose phosphorylase from Agrobacterium vitis (Rhizobium vitis).